We begin with the raw amino-acid sequence, 492 residues long: 3-octaprenyl-4-hydroxybenzoate carboxy-lyase (492 aa).

Asparagine 177 provides a ligand contact to Mn(2+). Prenylated FMN-binding positions include 180–182, 194–196, and 199–200; these read IYR, RWL, and RG. Glutamate 243 contacts Mn(2+). Aspartate 292 functions as the Proton donor in the catalytic mechanism.

The protein belongs to the UbiD family. Homohexamer. Prenylated FMN is required as a cofactor. It depends on Mn(2+) as a cofactor.

It localises to the cell membrane. The catalysed reaction is a 4-hydroxy-3-(all-trans-polyprenyl)benzoate + H(+) = a 2-(all-trans-polyprenyl)phenol + CO2. It participates in cofactor biosynthesis; ubiquinone biosynthesis. Its function is as follows. Catalyzes the decarboxylation of 3-octaprenyl-4-hydroxy benzoate to 2-octaprenylphenol, an intermediate step in ubiquinone biosynthesis. In Neisseria meningitidis serogroup A / serotype 4A (strain DSM 15465 / Z2491), this protein is 3-octaprenyl-4-hydroxybenzoate carboxy-lyase.